Reading from the N-terminus, the 127-residue chain is Putative B3 domain-containing protein At4g12617 (127 aa).

The TF-B3 DNA-binding region spans 35 to 127 (IMMPKTLLEA…HTRLNFKHVA (93 aa)).

It localises to the nucleus. This Arabidopsis thaliana (Mouse-ear cress) protein is Putative B3 domain-containing protein At4g12617.